A 380-amino-acid chain; its full sequence is Cytochrome b (380 aa).

The next 4 helical transmembrane spans lie at 34–54 (FGSL…LLAT), 78–99 (WLIR…YLHI), 114–134 (WNTG…GYVL), and 179–199 (FFAL…THLT). Residues His84 and His98 each coordinate heme b. The heme b site is built by His183 and His197. His202 contacts a ubiquinone. Transmembrane regions (helical) follow at residues 227–247 (PKDL…ALFS), 289–309 (LGGV…PFLH), 321–341 (LSQL…WVGS), and 348–368 (FIII…ILFP).

This sequence belongs to the cytochrome b family. The cytochrome bc1 complex contains 11 subunits: 3 respiratory subunits (MT-CYB, CYC1 and UQCRFS1), 2 core proteins (UQCRC1 and UQCRC2) and 6 low-molecular weight proteins (UQCRH/QCR6, UQCRB/QCR7, UQCRQ/QCR8, UQCR10/QCR9, UQCR11/QCR10 and a cleavage product of UQCRFS1). This cytochrome bc1 complex then forms a dimer. Requires heme b as cofactor.

The protein resides in the mitochondrion inner membrane. Component of the ubiquinol-cytochrome c reductase complex (complex III or cytochrome b-c1 complex) that is part of the mitochondrial respiratory chain. The b-c1 complex mediates electron transfer from ubiquinol to cytochrome c. Contributes to the generation of a proton gradient across the mitochondrial membrane that is then used for ATP synthesis. The polypeptide is Cytochrome b (MT-CYB) (Todus todus (Jamaican tody)).